We begin with the raw amino-acid sequence, 91 residues long: MGFSLSKSATQVSAIHMDSKVDDHLIRGTEKSRLEPATQLFQNTKKIRLEDTNQENFTRIEGTGTGSLSGKALGSVVYVKESDGLEMTDVE.

This is an uncharacterized protein from Homo sapiens (Human).